The following is a 411-amino-acid chain: Citrate synthase (411 aa).

Catalysis depends on residues His-304 and Asp-363.

It belongs to the citrate synthase family.

It carries out the reaction oxaloacetate + acetyl-CoA + H2O = citrate + CoA + H(+). It participates in carbohydrate metabolism; tricarboxylic acid cycle; isocitrate from oxaloacetate: step 1/2. The chain is Citrate synthase (gltA) from Rickettsia australis.